The sequence spans 504 residues: Maturase K (504 aa).

It belongs to the intron maturase 2 family. MatK subfamily.

It is found in the plastid. The protein localises to the chloroplast. Functionally, usually encoded in the trnK tRNA gene intron. Probably assists in splicing its own and other chloroplast group II introns. This chain is Maturase K, found in Arabidopsis lyrata (Lyre-leaved rock-cress).